The sequence spans 206 residues: Large ribosomal subunit protein uL4 (206 aa).

It belongs to the universal ribosomal protein uL4 family. As to quaternary structure, part of the 50S ribosomal subunit.

One of the primary rRNA binding proteins, this protein initially binds near the 5'-end of the 23S rRNA. It is important during the early stages of 50S assembly. It makes multiple contacts with different domains of the 23S rRNA in the assembled 50S subunit and ribosome. In terms of biological role, forms part of the polypeptide exit tunnel. In Rhodopseudomonas palustris (strain BisB18), this protein is Large ribosomal subunit protein uL4.